The chain runs to 311 residues: Formimidoylglutamase (311 aa).

Residues H122, D151, H153, D155, C242, and D244 each contribute to the Mn(2+) site.

This sequence belongs to the arginase family. The cofactor is Mn(2+).

The catalysed reaction is N-formimidoyl-L-glutamate + H2O = formamide + L-glutamate. It participates in amino-acid degradation; L-histidine degradation into L-glutamate; L-glutamate from N-formimidoyl-L-glutamate (hydrolase route): step 1/1. Its function is as follows. Catalyzes the conversion of N-formimidoyl-L-glutamate to L-glutamate and formamide. The chain is Formimidoylglutamase from Pseudomonas aeruginosa (strain UCBPP-PA14).